Here is a 258-residue protein sequence, read N- to C-terminus: Ribosomal RNA small subunit methyltransferase A (258 aa).

S-adenosyl-L-methionine contacts are provided by N12, L14, G38, E59, D83, and N100.

The protein belongs to the class I-like SAM-binding methyltransferase superfamily. rRNA adenine N(6)-methyltransferase family. RsmA subfamily.

The protein resides in the cytoplasm. The enzyme catalyses adenosine(1518)/adenosine(1519) in 16S rRNA + 4 S-adenosyl-L-methionine = N(6)-dimethyladenosine(1518)/N(6)-dimethyladenosine(1519) in 16S rRNA + 4 S-adenosyl-L-homocysteine + 4 H(+). In terms of biological role, specifically dimethylates two adjacent adenosines (A1518 and A1519) in the loop of a conserved hairpin near the 3'-end of 16S rRNA in the 30S particle. May play a critical role in biogenesis of 30S subunits. The polypeptide is Ribosomal RNA small subunit methyltransferase A (Metamycoplasma arthritidis (strain 158L3-1) (Mycoplasma arthritidis)).